Here is a 152-residue protein sequence, read N- to C-terminus: MSDDWESKTVIGSRARVGGGGPRATVAKTQAEINAAMRSGNVLSTDKKYASANSKDGGDGQRLTKIDRSDDIIAPPKVEASVGKAIIKGRSEKGLTQKELAVKINEKPQVVNDYESGRAQPNQQVLSKMERVLGIKLRGKDIGLPLGPKGKK.

The segment at 1-24 (MSDDWESKTVIGSRARVGGGGPRA) is disordered. In terms of domain architecture, HTH cro/C1-type spans 86–140 (IIKGRSEKGLTQKELAVKINEKPQVVNDYESGRAQPNQQVLSKMERVLGIKLRGK). The H-T-H motif DNA-binding region spans 97 to 116 (QKELAVKINEKPQVVNDYES).

The protein belongs to the MBF1 family.

Its function is as follows. Transcriptional coactivator that stimulates GCN4-dependent transcriptional activity by bridging the DNA-binding region of GCN4 and TBP (SPT15), thereby recruiting TBP to GCN4-bound promoters. Involved in induction of the ribosome quality control (RQC) pathway; a pathway that degrades nascent peptide chains during problematic translation. Required to prevent stalled ribosomes from frameshifting. The chain is Putative multi-protein-binding factor 1 (MBF1) from Yarrowia lipolytica (strain CLIB 122 / E 150) (Yeast).